Reading from the N-terminus, the 1291-residue chain is DNA-directed RNA polymerase subunit beta' (1291 aa).

Zn(2+) contacts are provided by Cys60, Cys62, Cys75, and Cys78. Residues Asp535, Asp537, and Asp539 each coordinate Mg(2+). Zn(2+)-binding residues include Cys874, Cys951, Cys958, and Cys961.

It belongs to the RNA polymerase beta' chain family. As to quaternary structure, the RNAP catalytic core consists of 2 alpha, 1 beta, 1 beta' and 1 omega subunit. When a sigma factor is associated with the core the holoenzyme is formed, which can initiate transcription. The cofactor is Mg(2+). Zn(2+) serves as cofactor.

The enzyme catalyses RNA(n) + a ribonucleoside 5'-triphosphate = RNA(n+1) + diphosphate. Functionally, DNA-dependent RNA polymerase catalyzes the transcription of DNA into RNA using the four ribonucleoside triphosphates as substrates. In Leifsonia xyli subsp. xyli (strain CTCB07), this protein is DNA-directed RNA polymerase subunit beta'.